Here is a 488-residue protein sequence, read N- to C-terminus: Monodehydroascorbate reductase 4, peroxisomal (488 aa).

Topologically, residues 1 to 3 (MGR) are cytoplasmic. The helical transmembrane segment at 4-24 (AFVYVILGGGVAAGYAALEFT) threads the bilayer. Residues 12 to 15 (GGVA), E39, R46, K51, and 145 to 146 (RD) each bind FAD. Residues 25–458 (RRGVSDGELC…SASVVMIKKP (434 aa)) are Peroxisomal-facing. Residues 170–176 (GGYIGME), E194, R200, and G259 contribute to the NAD(+) site. 172–176 (YIGME) is an NADP(+) binding site. R200 and G259 together coordinate NADP(+). D296 contributes to the FAD binding site. Position 312 to 313 (312 to 313 (EH)) interacts with NAD(+). 312 to 313 (EH) provides a ligand contact to NADP(+). V314 provides a ligand contact to FAD. An L-ascorbate-binding site is contributed by R318. Y344 contributes to the FAD binding site. Y344 is an NAD(+) binding site. Y344 serves as a coordination point for NADP(+). Residue R346 participates in L-ascorbate binding. Residues 459–479 (LYVWHAATGVVVAASVAAFAF) form a helical membrane-spanning segment. Residues 480–488 (WYGRRRRRW) lie on the Cytoplasmic side of the membrane.

It belongs to the FAD-dependent oxidoreductase family. It depends on FAD as a cofactor.

It is found in the peroxisome membrane. The enzyme catalyses 2 monodehydro-L-ascorbate radical + NADH + H(+) = 2 L-ascorbate + NAD(+). Functionally, catalyzes the conversion of monodehydroascorbate to ascorbate, oxidizing NADH in the process. Involved in the detoxification of H(2)O(2) that escapes the peroxisome and causes oxidative damage to oil bodies. The chain is Monodehydroascorbate reductase 4, peroxisomal from Arabidopsis thaliana (Mouse-ear cress).